We begin with the raw amino-acid sequence, 132 residues long: Proline-rich protein sgp2 (132 aa).

Positions 1 to 20 are cleaved as a signal peptide; that stretch reads MKYCFVFFVTLICLIANCSA. 2 disordered regions span residues 23-62 and 87-132; these read EGDKGLSAAPTDGKQIERASDKTSEENDGNTNAQGDSNSR and GASV…LGLP. The segment covering 36-47 has biased composition (basic and acidic residues); sequence KQIERASDKTSE. The span at 51-62 shows a compositional bias: polar residues; the sequence is GNTNAQGDSNSR. Residues 91–105 show a composition bias toward low complexity; that stretch reads PQLPDLPTTPSLPDM.

Its subcellular location is the secreted. This Glossina morsitans morsitans (Savannah tsetse fly) protein is Proline-rich protein sgp2 (sgp2).